Here is a 216-residue protein sequence, read N- to C-terminus: Ceramide-1-phosphate transfer protein (216 aa).

Positions 56, 60, 108, 112, and 152 each coordinate an N-acylsphingoid base 1-phosphate.

The protein belongs to the GLTP family.

The protein resides in the cytoplasm. Its subcellular location is the cytosol. It localises to the golgi apparatus. It is found in the trans-Golgi network membrane. The protein localises to the cell membrane. The protein resides in the endosome membrane. Its subcellular location is the nucleus outer membrane. The enzyme catalyses N-(hexadecanoyl)-sphing-4-enine-1-phosphate(in) = N-(hexadecanoyl)-sphing-4-enine-1-phosphate(out). It catalyses the reaction N-(9Z-octadecenoyl)-sphing-4-enine-1-phosphate(in) = N-(9Z-octadecenoyl)-sphing-4-enine-1-phosphate(out). Functionally, mediates the intracellular transfer of ceramide-1-phosphate (C1P) between organelle membranes and the cell membrane. Required for normal structure of the Golgi stacks. Can bind phosphoceramides with a variety of aliphatic chains, but has a preference for lipids with saturated C16:0 or monounsaturated C18:1 aliphatic chains, and is inefficient with phosphoceramides containing lignoceryl (C24:0). Plays a role in the regulation of the cellular levels of ceramide-1-phosphate, and thereby contributes to the regulation of phospholipase PLA2G4A activity and the release of arachidonic acid. Has no activity with galactosylceramide, lactosylceramide, sphingomyelin, phosphatidylcholine, phosphatidic acid and ceramide. C1P transfer is stimulated by phosphatidylserine in C1P source vesicles. Regulates autophagy, inflammasome mediated IL1B and IL18 processing, and pyroptosis, but not apoptosis. This chain is Ceramide-1-phosphate transfer protein (Cptp), found in Rattus norvegicus (Rat).